The chain runs to 385 residues: HAT1-interacting factor 1 (385 aa).

The tract at residues 80–199 is important for interaction with heterotetrameric histone H3 and H4 and for interaction with dimeric histone H2A and H2B; it reads GNLFGDALLA…RKSGFHIYFE (120 aa). Composition is skewed to low complexity over residues 85–97 and 105–116; these read DALL…SGSE and DVSNGEEGNENG. The tract at residues 85–163 is disordered; the sequence is DALLAGDDGS…EEENVEKEEE (79 aa). Residues 129–160 are compositionally biased toward acidic residues; it reads DQEEEDLTGDVDSGDSEDSGEGSEEEEENVEK. Position 174 is a phosphoserine (S174). 3 TPR repeats span residues 186 to 220, 229 to 262, and 289 to 322; these read VSQL…LGRP, ENSR…YLKA, and ALRW…RPKD. Residues 248-332 form an interaction with dimeric histone H2A and H2B region; that stretch reads EAEMFSRAIH…SELQQARLAQ (85 aa). The tract at residues 340 to 385 is disordered; the sequence is VQENQQHGSKRPLSQPTTSIGFPALEKPLGDFNDLSQLVKKKPRRH. Over residues 342–359 the composition is skewed to polar residues; it reads ENQQHGSKRPLSQPTTSI.

Belongs to the NASP family. In terms of assembly, homodimer. The homodimer interacts with a histone tetramer containing H3 and H4; the interaction is direct. The homodimer interacts with heterodimeric histone H2A and H2B; the interaction is direct. Component of the nuclear histone acetyltransferase B (HAT-B) complex composed of at least HAT1, HAT2 and HIF1. Does not interact with HAT1 in the absence of HAT2. Interacts with histones H3 and H4 in a HAT1/HAT2 dependent manner. Interaction with heterotetrameric histone H3 and H4 precludes interaction with dimeric histone H2A and H2B, irrespective of the fact that their binding involves non-identical regions of the protein.

The protein localises to the nucleus. Functionally, histone H3 and H4 specific chaperone component of the nuclear histone acetyltransferase B (HAT-B) complex. Involved in chromatin assembly and telomere silencing. This Saccharomyces cerevisiae (strain ATCC 204508 / S288c) (Baker's yeast) protein is HAT1-interacting factor 1 (HIF1).